The chain runs to 257 residues: Gamma-secretase subunit APH-1B (257 aa).

Transmembrane regions (helical) follow at residues 5-25, 32-52, 66-86, 115-135, 160-180, 186-206, and 213-233; these read VFFG…VFTI, VIFL…SSVF, PVQN…QELF, LLAY…SFVN, AFMT…FFDG, WYTL…TFLS, and LVTA…VAGG.

It belongs to the APH-1 family. Probable component of the gamma-secretase complex, a complex composed of a presenilin homodimer (PSEN1 or PSEN2), nicastrin (NCSTN), APH1 (APH1A or APH1B) and PEN2. Such minimal complex is sufficient for secretase activity, although other components may exist. Interacts with PSEN1 and PSEN2.

It localises to the membrane. Its function is as follows. Probable subunit of the gamma-secretase complex, an endoprotease complex that catalyzes the intramembrane cleavage of integral proteins such as Notch receptors and APP (amyloid-beta precursor protein). It probably represents a stabilizing cofactor for the presenilin homodimer that promotes the formation of a stable complex. Probably present in a minority of gamma-secretase complexes compared to APH1A. This Mus musculus (Mouse) protein is Gamma-secretase subunit APH-1B (Aph1b).